Reading from the N-terminus, the 215-residue chain is Large ribosomal subunit protein uL3 (215 aa).

The disordered stretch occupies residues 136-161 (GVSISHRSHGSTGQRQDPGKVFKGKK). The residue at position 151 (Gln151) is an N5-methylglutamine.

This sequence belongs to the universal ribosomal protein uL3 family. Part of the 50S ribosomal subunit. Forms a cluster with proteins L14 and L19. In terms of processing, methylated by PrmB.

One of the primary rRNA binding proteins, it binds directly near the 3'-end of the 23S rRNA, where it nucleates assembly of the 50S subunit. This is Large ribosomal subunit protein uL3 from Rickettsia akari (strain Hartford).